Consider the following 235-residue polypeptide: Small ribosomal subunit protein uS3 (235 aa).

The 69-residue stretch at 39 to 107 (IREFIKEECK…ELHLNIVEVR (69 aa)) folds into the KH type-2 domain. The interval 213–235 (QARDRKAQELQDGPAPRGAGGRR) is disordered.

The protein belongs to the universal ribosomal protein uS3 family. Part of the 30S ribosomal subunit. Forms a tight complex with proteins S10 and S14.

Its function is as follows. Binds the lower part of the 30S subunit head. Binds mRNA in the 70S ribosome, positioning it for translation. The polypeptide is Small ribosomal subunit protein uS3 (Ruegeria pomeroyi (strain ATCC 700808 / DSM 15171 / DSS-3) (Silicibacter pomeroyi)).